Consider the following 114-residue polypeptide: Large ribosomal subunit protein uL18 (114 aa).

Belongs to the universal ribosomal protein uL18 family. Part of the 50S ribosomal subunit; part of the 5S rRNA/L5/L18/L25 subcomplex. Contacts the 5S and 23S rRNAs.

This is one of the proteins that bind and probably mediate the attachment of the 5S RNA into the large ribosomal subunit, where it forms part of the central protuberance. In Parabacteroides distasonis (strain ATCC 8503 / DSM 20701 / CIP 104284 / JCM 5825 / NCTC 11152), this protein is Large ribosomal subunit protein uL18.